The primary structure comprises 323 residues: Beta-ketoacyl-[acyl-carrier-protein] synthase III (323 aa).

Catalysis depends on residues Cys113 and His250. The tract at residues 251 to 255 (QANKR) is ACP-binding. Asn280 is an active-site residue.

It belongs to the thiolase-like superfamily. FabH family. Homodimer.

The protein resides in the cytoplasm. It carries out the reaction malonyl-[ACP] + acetyl-CoA + H(+) = 3-oxobutanoyl-[ACP] + CO2 + CoA. Its pathway is lipid metabolism; fatty acid biosynthesis. In terms of biological role, catalyzes the condensation reaction of fatty acid synthesis by the addition to an acyl acceptor of two carbons from malonyl-ACP. Catalyzes the first condensation reaction which initiates fatty acid synthesis and may therefore play a role in governing the total rate of fatty acid production. Possesses both acetoacetyl-ACP synthase and acetyl transacylase activities. Its substrate specificity determines the biosynthesis of branched-chain and/or straight-chain of fatty acids. In Agrobacterium fabrum (strain C58 / ATCC 33970) (Agrobacterium tumefaciens (strain C58)), this protein is Beta-ketoacyl-[acyl-carrier-protein] synthase III.